The chain runs to 66 residues: Beta-mammal toxin Cv5 (66 aa).

In terms of domain architecture, LCN-type CS-alpha/beta spans 1 to 66 (KEGYIVNYYD…VWPLPKKKCN (66 aa)). Disulfide bonds link Cys-12–Cys-65, Cys-16–Cys-41, Cys-25–Cys-46, and Cys-29–Cys-48.

As to expression, expressed by the venom gland.

The protein localises to the secreted. Is susceptible to be neutralized by human antibodies scFvs 10FG2 and HV. Its function is as follows. Beta toxins bind voltage-independently at site-4 of sodium channels (Nav) and reduces peak current and shifts the voltage of activation toward more negative potentials thereby affecting sodium channel activation and promoting spontaneous and repetitive firing. This toxin is moderately toxic to mice. The protein is Beta-mammal toxin Cv5 of Centruroides villegasi (Scorpion).